A 123-amino-acid polypeptide reads, in one-letter code: Large ribosomal subunit protein bL12 (123 aa).

It belongs to the bacterial ribosomal protein bL12 family. In terms of assembly, homodimer. Part of the ribosomal stalk of the 50S ribosomal subunit. Forms a multimeric L10(L12)X complex, where L10 forms an elongated spine to which 2 to 4 L12 dimers bind in a sequential fashion. Binds GTP-bound translation factors.

In terms of biological role, forms part of the ribosomal stalk which helps the ribosome interact with GTP-bound translation factors. Is thus essential for accurate translation. This Shewanella sp. (strain ANA-3) protein is Large ribosomal subunit protein bL12.